Reading from the N-terminus, the 240-residue chain is Putative RING finger protein ORF96 (240 aa).

Residues 9 to 44 form an RING-type 1 zinc finger; sequence CVVCMEEKPLVVFEPCMHHNCCESCSGHVSNCPYCR. The segment at 150-202 adopts an RING-type 2; degenerate zinc-finger fold; it reads CVICKKEIKEEVGKTYMHACCTATICKPCAKAILKAMVEKEITENLPFCPYCF.

This Ostreid herpesvirus 1 (isolate France) (OsHV-1) protein is Putative RING finger protein ORF96.